We begin with the raw amino-acid sequence, 208 residues long: Guanylate kinase (208 aa).

A Guanylate kinase-like domain is found at 4-184 (GTLYIVSAPS…ALMDFKAIIR (181 aa)). 11-18 (APSGAGKS) contacts ATP.

The protein belongs to the guanylate kinase family.

The protein resides in the cytoplasm. The catalysed reaction is GMP + ATP = GDP + ADP. Its function is as follows. Essential for recycling GMP and indirectly, cGMP. The polypeptide is Guanylate kinase (Photobacterium profundum (strain SS9)).